The chain runs to 97 residues: Phosphoribosyl-ATP pyrophosphatase (97 aa).

Belongs to the PRA-PH family.

Its subcellular location is the cytoplasm. It carries out the reaction 1-(5-phospho-beta-D-ribosyl)-ATP + H2O = 1-(5-phospho-beta-D-ribosyl)-5'-AMP + diphosphate + H(+). Its pathway is amino-acid biosynthesis; L-histidine biosynthesis; L-histidine from 5-phospho-alpha-D-ribose 1-diphosphate: step 2/9. The protein is Phosphoribosyl-ATP pyrophosphatase of Methanoculleus marisnigri (strain ATCC 35101 / DSM 1498 / JR1).